We begin with the raw amino-acid sequence, 71 residues long: Calcium dodecin (71 aa).

Residue glutamate 18 coordinates Ca(2+).

The protein belongs to the dodecin family. As to quaternary structure, homododecamer; 12 subunits assemble to form a hollow sphere with a diameter of about 75 Angstroms. Calcium ions are bound at the interface between three subunits.

Binds calcium ions. May play a role in sequestering additional small ligands. This Mycobacterium tuberculosis (strain ATCC 25618 / H37Rv) protein is Calcium dodecin (secE2).